The primary structure comprises 695 residues: Exocyst complex component EXO70C2 (695 aa).

Residues 1 to 36 (MEKNDKDPDHDDKSKGDEKGDVVSDAHPSDDAHHQD) are compositionally biased toward basic and acidic residues. 2 disordered regions span residues 1 to 71 (MEKN…EEAP) and 210 to 229 (VVTDDSNSQRRSTADQQDHQ). The residue at position 212 (threonine 212) is a Phosphothreonine. 2 positions are modified to phosphoserine: serine 215 and serine 217. Phosphothreonine is present on threonine 446. Phosphoserine occurs at positions 494 and 605.

Belongs to the EXO70 family. Interacts with ROH1A and ROH1D independently of its phosphorylation status. Post-translationally, phosphorylation on Ser and Thr residues promotes its ability to repress pollen tube growth and to regulate cellular architecture at the pollen tube tip. Expressed in anthers, pollen and root trichoblast cells. Also observed in anther tapetum.

The protein localises to the cytoplasm. Functionally, required for optimal tip growth of pollen tube; dose-dependent negative regulator of exocyst function in pollen tube growth and cellular architecture at the pollen tube tip, probably by modulating membrane trafficking and exocytosis dynamics. This chain is Exocyst complex component EXO70C2, found in Arabidopsis thaliana (Mouse-ear cress).